The chain runs to 178 residues: Ribosome maturation factor RimM (178 aa).

The 78-residue stretch at 101-178 (EGEFYWYQLQ…EMRVDWDADF (78 aa)) folds into the PRC barrel domain.

It belongs to the RimM family. As to quaternary structure, binds ribosomal protein uS19.

Its subcellular location is the cytoplasm. Functionally, an accessory protein needed during the final step in the assembly of 30S ribosomal subunit, possibly for assembly of the head region. Essential for efficient processing of 16S rRNA. May be needed both before and after RbfA during the maturation of 16S rRNA. It has affinity for free ribosomal 30S subunits but not for 70S ribosomes. The polypeptide is Ribosome maturation factor RimM (Ectopseudomonas mendocina (strain ymp) (Pseudomonas mendocina)).